A 105-amino-acid chain; its full sequence is Large ribosomal subunit protein eL42z/eL42y (105 aa).

Positions 28 to 57 (YKKGKDSLAAQGKRRYDRKQSGYGGQTKPV) are disordered.

The protein belongs to the eukaryotic ribosomal protein eL42 family.

This chain is Large ribosomal subunit protein eL42z/eL42y (RPL36AA), found in Arabidopsis thaliana (Mouse-ear cress).